The chain runs to 276 residues: Bis(5'-nucleosyl)-tetraphosphatase, symmetrical (276 aa).

The protein belongs to the Ap4A hydrolase family.

It carries out the reaction P(1),P(4)-bis(5'-adenosyl) tetraphosphate + H2O = 2 ADP + 2 H(+). Its function is as follows. Hydrolyzes diadenosine 5',5'''-P1,P4-tetraphosphate to yield ADP. This Mannheimia succiniciproducens (strain KCTC 0769BP / MBEL55E) protein is Bis(5'-nucleosyl)-tetraphosphatase, symmetrical.